We begin with the raw amino-acid sequence, 150 residues long: SsrA-binding protein (150 aa).

Belongs to the SmpB family.

The protein resides in the cytoplasm. Required for rescue of stalled ribosomes mediated by trans-translation. Binds to transfer-messenger RNA (tmRNA), required for stable association of tmRNA with ribosomes. tmRNA and SmpB together mimic tRNA shape, replacing the anticodon stem-loop with SmpB. tmRNA is encoded by the ssrA gene; the 2 termini fold to resemble tRNA(Ala) and it encodes a 'tag peptide', a short internal open reading frame. During trans-translation Ala-aminoacylated tmRNA acts like a tRNA, entering the A-site of stalled ribosomes, displacing the stalled mRNA. The ribosome then switches to translate the ORF on the tmRNA; the nascent peptide is terminated with the 'tag peptide' encoded by the tmRNA and targeted for degradation. The ribosome is freed to recommence translation, which seems to be the essential function of trans-translation. The sequence is that of SsrA-binding protein from Borrelia garinii subsp. bavariensis (strain ATCC BAA-2496 / DSM 23469 / PBi) (Borreliella bavariensis).